Reading from the N-terminus, the 202-residue chain is tRNA (pseudouridine(54)-N(1))-methyltransferase (202 aa).

Residues L134 and G155 each coordinate S-adenosyl-L-methionine.

The protein belongs to the methyltransferase superfamily. TrmY family. As to quaternary structure, homodimer.

Its subcellular location is the cytoplasm. It catalyses the reaction pseudouridine(54) in tRNA + S-adenosyl-L-methionine = N(1)-methylpseudouridine(54) in tRNA + S-adenosyl-L-homocysteine + H(+). Its function is as follows. Specifically catalyzes the N1-methylation of pseudouridine at position 54 (Psi54) in tRNAs. This chain is tRNA (pseudouridine(54)-N(1))-methyltransferase, found in Thermococcus gammatolerans (strain DSM 15229 / JCM 11827 / EJ3).